We begin with the raw amino-acid sequence, 752 residues long: Exocyst complex component EXO84B (752 aa).

2 disordered regions span residues 511 to 532 (QTGQ…NPEQ) and 724 to 752 (TKGN…HGSY). The span at 515–532 (RTDDLRRPLDRQNRNPEQ) shows a compositional bias: basic and acidic residues. The segment covering 733 to 752 (SPTASVSAQSVSSARSHGSY) has biased composition (low complexity).

This sequence belongs to the EXO84 family. The exocyst complex is composed of SEC3, SEC5, SEC6, SEC8, SEC10, EXO70A1 and EXO84B. Interacts with SEC6, SEC10, SEC15B and EXO70A1. Interacts with EXO70B1. Binds directly to B1L.

It is found in the cytoplasm. It localises to the cytosol. The protein localises to the perinuclear region. The protein resides in the cytoskeleton. Its subcellular location is the phragmoplast. It is found in the secreted. It localises to the cell wall. The protein localises to the cell membrane. In terms of biological role, component of the exocyst complex involved in the docking of exocytic vesicles with fusion sites on the plasma membrane during regulated or polarized secretion. Involved in polarized cell growth and organ morphogenesis. During cytokinesis, involved in cell plate initiation, cell plate maturation and formation of new primary cell wall. Probable component of an exocyst subcomplex specifically involved in autophagy-related, Golgi-independent membrane traffic to the vacuole. Regulates autophagosome formation and autophagy-related Golgi-independent import into the vacuole. Mediates ABCG36/PEN3 outer-membrane polarity at the periphery of lateral root cap and root epidermal cells. This chain is Exocyst complex component EXO84B, found in Arabidopsis thaliana (Mouse-ear cress).